A 519-amino-acid polypeptide reads, in one-letter code: Matrix metalloproteinase-B (519 aa).

The signal sequence occupies residues 1 to 26 (MTKWSPNGNPLSTIYLILSLFTLAHT). A propeptide spans 27-126 (APTTQHSRTT…RQEQTKRTKR (100 aa)) (activation peptide). Residues 29–39 (TTQHSRTTTQL) are compositionally biased toward polar residues. Residues 29-50 (TTQHSRTTTQLRLEDEDGGGGV) are disordered. A Cysteine switch motif is present at residues 109 to 116 (PRCTQTDV). Zn(2+)-binding residues include Cys-111, His-208, Asp-210, His-232, His-247, and His-276. The active site involves Glu-277. The Zn(2+) site is built by His-280 and His-286. Residue Asn-341 is glycosylated (N-linked (GlcNAc...) asparagine). A compositionally biased stretch (basic and acidic residues) spans 391-402 (KDKRSYRGDSKI). The tract at residues 391–410 (KDKRSYRGDSKIPKCSSNNS) is disordered. Asn-408 carries N-linked (GlcNAc...) asparagine glycosylation.

It belongs to the peptidase M10A family. Requires Zn(2+) as cofactor. In terms of tissue distribution, expressed in spermatheca and spermathecal-uterine valve, weakly in vulva and anal muscles and in two cells in the head (probably RMEV and RMED motor neurons).

The protein resides in the secreted. Its subcellular location is the extracellular space. The protein localises to the extracellular matrix. With respect to regulation, inhibited by human TIMP1 and TIMP2 and the broad MMP inhibitors BB94 (Batimastat) and CT543. Metalloprotease involved in molting, a process during larval stages in which a new cuticle is formed and the old cuticle is shed. Plays a role in thermotolerance probably by preventing the accumulation of oxidized lipoproteins and cholesterol. The sequence is that of Matrix metalloproteinase-B from Caenorhabditis elegans.